Consider the following 450-residue polypeptide: tRNA-2-methylthio-N(6)-dimethylallyladenosine synthase (450 aa).

The region spanning 3–118 is the MTTase N-terminal domain; sequence KKVFIKTFGC…LPELLQQRER (116 aa). Cys12, Cys49, Cys81, Cys155, Cys159, and Cys162 together coordinate [4Fe-4S] cluster. The 236-residue stretch at 141 to 376 folds into the Radical SAM core domain; the sequence is SVQGASAFVS…VIDTHIRSIS (236 aa). In terms of domain architecture, TRAM spans 377-440; the sequence is ASRVGTVQRI…AYTLRGQYCA (64 aa).

This sequence belongs to the methylthiotransferase family. MiaB subfamily. In terms of assembly, monomer. [4Fe-4S] cluster serves as cofactor.

The protein resides in the cytoplasm. It carries out the reaction N(6)-dimethylallyladenosine(37) in tRNA + (sulfur carrier)-SH + AH2 + 2 S-adenosyl-L-methionine = 2-methylsulfanyl-N(6)-dimethylallyladenosine(37) in tRNA + (sulfur carrier)-H + 5'-deoxyadenosine + L-methionine + A + S-adenosyl-L-homocysteine + 2 H(+). In terms of biological role, catalyzes the methylthiolation of N6-(dimethylallyl)adenosine (i(6)A), leading to the formation of 2-methylthio-N6-(dimethylallyl)adenosine (ms(2)i(6)A) at position 37 in tRNAs that read codons beginning with uridine. The polypeptide is tRNA-2-methylthio-N(6)-dimethylallyladenosine synthase (Verminephrobacter eiseniae (strain EF01-2)).